Here is a 481-residue protein sequence, read N- to C-terminus: Aspartyl/glutamyl-tRNA(Asn/Gln) amidotransferase subunit B (481 aa).

This sequence belongs to the GatB/GatE family. GatB subfamily. In terms of assembly, heterotrimer of A, B and C subunits.

It catalyses the reaction L-glutamyl-tRNA(Gln) + L-glutamine + ATP + H2O = L-glutaminyl-tRNA(Gln) + L-glutamate + ADP + phosphate + H(+). It carries out the reaction L-aspartyl-tRNA(Asn) + L-glutamine + ATP + H2O = L-asparaginyl-tRNA(Asn) + L-glutamate + ADP + phosphate + 2 H(+). Its function is as follows. Allows the formation of correctly charged Asn-tRNA(Asn) or Gln-tRNA(Gln) through the transamidation of misacylated Asp-tRNA(Asn) or Glu-tRNA(Gln) in organisms which lack either or both of asparaginyl-tRNA or glutaminyl-tRNA synthetases. The reaction takes place in the presence of glutamine and ATP through an activated phospho-Asp-tRNA(Asn) or phospho-Glu-tRNA(Gln). The sequence is that of Aspartyl/glutamyl-tRNA(Asn/Gln) amidotransferase subunit B from Pseudomonas syringae pv. tomato (strain ATCC BAA-871 / DC3000).